Here is a 112-residue protein sequence, read N- to C-terminus: Large ribosomal subunit protein uL22 (112 aa).

The protein belongs to the universal ribosomal protein uL22 family. Part of the 50S ribosomal subunit.

In terms of biological role, this protein binds specifically to 23S rRNA; its binding is stimulated by other ribosomal proteins, e.g. L4, L17, and L20. It is important during the early stages of 50S assembly. It makes multiple contacts with different domains of the 23S rRNA in the assembled 50S subunit and ribosome. Its function is as follows. The globular domain of the protein is located near the polypeptide exit tunnel on the outside of the subunit, while an extended beta-hairpin is found that lines the wall of the exit tunnel in the center of the 70S ribosome. This is Large ribosomal subunit protein uL22 from Finegoldia magna (strain ATCC 29328 / DSM 20472 / WAL 2508) (Peptostreptococcus magnus).